The chain runs to 254 residues: Phosphatidylglycerol--prolipoprotein diacylglyceryl transferase (254 aa).

3 helical membrane-spanning segments follow: residues 11–31 (LAIR…LLLA), 49–69 (FLIA…IFEF), and 84–104 (QGGL…YIYL). Arg-130 provides a ligand contact to a 1,2-diacyl-sn-glycero-3-phospho-(1'-sn-glycerol). The next 3 helical transmembrane spans lie at 169-189 (PTFL…VYLL), 196-216 (GIVF…IEGL), and 228-248 (VAQL…YNII).

The protein belongs to the Lgt family.

The protein localises to the cell membrane. The catalysed reaction is L-cysteinyl-[prolipoprotein] + a 1,2-diacyl-sn-glycero-3-phospho-(1'-sn-glycerol) = an S-1,2-diacyl-sn-glyceryl-L-cysteinyl-[prolipoprotein] + sn-glycerol 1-phosphate + H(+). It functions in the pathway protein modification; lipoprotein biosynthesis (diacylglyceryl transfer). Catalyzes the transfer of the diacylglyceryl group from phosphatidylglycerol to the sulfhydryl group of the N-terminal cysteine of a prolipoprotein, the first step in the formation of mature lipoproteins. In Clostridium botulinum (strain Loch Maree / Type A3), this protein is Phosphatidylglycerol--prolipoprotein diacylglyceryl transferase.